The sequence spans 245 residues: MYPVDLHMHTVASTHAYSTLSDYIAQAKQKGIKLFAITDHGPDMEDAPHHWHFINMRIWPRVVDGVGILRGIEANIKNVDGEIDCSGKMFDSLDLIIAGFHEPVFAPHDKATNTQAMIATIASGNVHIISHPGNPKYEIDVKAVAEAAAKHQVALEINNSSFLHSRKGSEDNCRAVAAAVRDAGGWVALGSDSHTAFTMGEFEECLKILDAVDFPPERILNVSPRRLLNFLESRGMAPIAEFADL.

Zn(2+)-binding residues include histidine 7, histidine 9, histidine 15, histidine 40, glutamate 73, histidine 101, histidine 131, aspartate 192, and histidine 194.

The protein belongs to the PHP family. Homotrimer. Zn(2+) is required as a cofactor.

This is Probable phosphatase YcdX from Escherichia coli O17:K52:H18 (strain UMN026 / ExPEC).